The sequence spans 449 residues: UDP-N-acetylmuramoylalanine--D-glutamate ligase (449 aa).

119–125 (GTNGKTT) lines the ATP pocket.

The protein belongs to the MurCDEF family.

It localises to the cytoplasm. The enzyme catalyses UDP-N-acetyl-alpha-D-muramoyl-L-alanine + D-glutamate + ATP = UDP-N-acetyl-alpha-D-muramoyl-L-alanyl-D-glutamate + ADP + phosphate + H(+). It participates in cell wall biogenesis; peptidoglycan biosynthesis. Functionally, cell wall formation. Catalyzes the addition of glutamate to the nucleotide precursor UDP-N-acetylmuramoyl-L-alanine (UMA). The sequence is that of UDP-N-acetylmuramoylalanine--D-glutamate ligase from Lactococcus lactis subsp. cremoris (strain SK11).